Here is a 291-residue protein sequence, read N- to C-terminus: Shikimate dehydrogenase (NADP(+)) (291 aa).

Shikimate contacts are provided by residues 23-25 and threonine 70; that span reads SFS. The active-site Proton acceptor is lysine 74. Positions 95 and 110 each coordinate shikimate. Residues 135 to 139 and leucine 232 each bind NADP(+); that span reads GAGGA. Residue tyrosine 234 participates in shikimate binding. Glycine 255 is a binding site for NADP(+).

It belongs to the shikimate dehydrogenase family. Homodimer.

The enzyme catalyses shikimate + NADP(+) = 3-dehydroshikimate + NADPH + H(+). It participates in metabolic intermediate biosynthesis; chorismate biosynthesis; chorismate from D-erythrose 4-phosphate and phosphoenolpyruvate: step 4/7. Its function is as follows. Involved in the biosynthesis of the chorismate, which leads to the biosynthesis of aromatic amino acids. Catalyzes the reversible NADPH linked reduction of 3-dehydroshikimate (DHSA) to yield shikimate (SA). This Desulforamulus reducens (strain ATCC BAA-1160 / DSM 100696 / MI-1) (Desulfotomaculum reducens) protein is Shikimate dehydrogenase (NADP(+)).